A 1292-amino-acid polypeptide reads, in one-letter code: (E3-independent) E2 ubiquitin-conjugating enzyme (1292 aa).

Residues 1–37 (MADPAAPTPAAPAPAQAPAPAPEAVPAPAAAPVPAPA) show a composition bias toward pro residues. Disordered stretches follow at residues 1–56 (MADP…EAGS) and 85–114 (EDSD…EGRA). Residues 38 to 56 (PASDSASGPSSDSGPEAGS) are compositionally biased toward low complexity. Ser50, Ser87, Ser89, Ser399, and Ser401 each carry phosphoserine. Disordered stretches follow at residues 401–459 (SPDT…AGEQ), 472–519 (RLHS…IPLS), and 714–746 (IEES…TDNG). The span at 406-427 (CSRDHSMEDPDKKGESKTKSEA) shows a compositional bias: basic and acidic residues. Ser441 bears the Phosphoserine mark. The segment covering 478–490 (QDADDEAADDTDD) has biased composition (acidic residues). Thr488 and Thr491 each carry phosphothreonine. Residues 491-510 (TSSVTSSASSTTSSQSGSGT) are compositionally biased toward low complexity. Residues 512–536 (RKKSIPLSIKNLKRKHKRKKNKITR) carry the Nuclear localization signal motif. Position 515 is a phosphoserine (Ser515). The span at 732-742 (DEWEDDSDSWE) shows a compositional bias: acidic residues. Residues 812 to 882 (RELKEAIKIL…IVEEEKMEAV (71 aa)) are a coiled coil. Position 836 is a phosphoserine (Ser836). Residue Thr838 is modified to Phosphothreonine. Phosphoserine is present on Ser839. Positions 882-893 (VPDVERKEDKPE) are enriched in basic and acidic residues. A disordered region spans residues 882–903 (VPDVERKEDKPEGQSPVKAEWP). At Ser896 the chain carries Phosphoserine. In terms of domain architecture, UBC core spans 953-1113 (KFFSTVRKEM…ALIRVVQSMT (161 aa)). Cys1040 serves as the catalytic Glycyl thioester intermediate. Residues 1160 to 1248 (NGVPKASSSP…KSYRSFLPEK (89 aa)) form a disordered region.

The protein belongs to the ubiquitin-conjugating enzyme family. As to quaternary structure, interacts with CPNE1 (via VWFA domain) and CPNE4 (via VWFA domain). Interacts with UBR2. Phosphorylated. Phosphorylation affects subcellular location. Post-translationally, ubiquitinated: autoubiquitinates, possibly affecting its subcellular location. As to expression, predominantly expressed in skeletal muscle and heart.

It is found in the cytoplasm. Its subcellular location is the nucleus. It catalyses the reaction S-ubiquitinyl-[E1 ubiquitin-activating enzyme]-L-cysteine + [acceptor protein]-L-lysine = [E1 ubiquitin-activating enzyme]-L-cysteine + N(6)-monoubiquitinyl-[acceptor protein]-L-lysine.. The protein operates within protein modification; protein ubiquitination. With respect to regulation, inhibited by phenylarsine oxide (PAO). Its function is as follows. E2/E3 hybrid ubiquitin-protein ligase that displays both E2 and E3 ligase activities and mediates monoubiquitination of target proteins. Negatively regulates TRAF6-mediated NF-kappa-B activation independently of its E2 activity. Acts as a positive regulator of BMP7 signaling by mediating monoubiquitination of SMAD6, thereby regulating adipogenesis. Mediates monoubiquitination at different sites of the nuclear localization signal (NLS) of BAP1, leading to cytoplasmic retention of BAP1. Also able to monoubiquitinate the NLS of other chromatin-associated proteins, such as INO80 and CXXC1, affecting their subcellular location. Acts as a regulator of retrograde transport by assisting the TRIM27:MAGEL2 E3 ubiquitin ligase complex to mediate 'Lys-63'-linked ubiquitination of WASHC1, leading to promote endosomal F-actin assembly. This is (E3-independent) E2 ubiquitin-conjugating enzyme (UBE2O) from Homo sapiens (Human).